The sequence spans 246 residues: Acetoacetate decarboxylase (246 aa).

K116 functions as the Schiff-base intermediate with acetoacetate in the catalytic mechanism.

This sequence belongs to the ADC family.

The enzyme catalyses acetoacetate + H(+) = acetone + CO2. Catalyzes the conversion of acetoacetate to acetone and carbon dioxide. The sequence is that of Acetoacetate decarboxylase from Burkholderia cenocepacia (strain HI2424).